We begin with the raw amino-acid sequence, 263 residues long: P29 (263 aa).

The segment covering 30-39 has biased composition (basic and acidic residues); it reads VPEGLRDISK. A disordered region spans residues 30–93; the sequence is VPEGLRDISK…PKQKQLAPPI (64 aa). Over residues 52–64 the composition is skewed to polar residues; sequence LSRASARPQQLQP.

The protein is P29 (p29) of Citrus sinensis (Sweet orange).